Consider the following 540-residue polypeptide: Solute carrier family 2, facilitated glucose transporter member 9 (540 aa).

Residues 1–31 (MARKQNRNSKELGLVPLTDDTSHAGPPGPGR) are disordered. The Cytoplasmic portion of the chain corresponds to 1-51 (MARKQNRNSKELGLVPLTDDTSHAGPPGPGRALLECDHLRSGVPGGRRRKD). S9 is modified (phosphoserine). The helical transmembrane segment at 52 to 72 (WSCSLLVASLAGAFGSSFLYG) threads the bilayer. Over 73–107 (YNLSVVNAPTPYIKAFYNESWERRHGRPIDPDTLT) the chain is Extracellular. N90 is a glycosylation site (N-linked (GlcNAc...) asparagine). A helical transmembrane segment spans residues 108–128 (LLWSVTVSIFAIGGLVGTLIV). Topologically, residues 129–140 (KMIGKVLGRKHT) are cytoplasmic. Residues 141–161 (LLANNGFAISAALLMACSLQA) form a helical membrane-spanning segment. The Extracellular segment spans residues 162 to 171 (GAFEMLIVGR). Residues 172–192 (FIMGIDGGVALSVLPMYLSEI) form a helical membrane-spanning segment. Topologically, residues 193-200 (SPKEIRGS) are cytoplasmic. A helical transmembrane segment spans residues 201-221 (LGQVTAIFICIGVFTGQLLGL). Residues 222–231 (PELLGKESTW) lie on the Extracellular side of the membrane. A helical membrane pass occupies residues 232-252 (PYLFGVIVVPAVVQLLSLPFL). Topologically, residues 253–316 (PDSPRYLLLE…LLRAPYVRWQ (64 aa)) are cytoplasmic. A helical membrane pass occupies residues 317 to 337 (VVTVIVTMACYQLCGLNAIWF). Residues 338–354 (YTNSIFGKAGIPPAKIP) are Extracellular-facing. Residues 355 to 375 (YVTLSTGGIETLAAVFSGLVI) form a helical membrane-spanning segment. The Cytoplasmic segment spans residues 376 to 381 (EHLGRR). The chain crosses the membrane as a helical span at residues 382 to 402 (PLLIGGFGLMGLFFGTLTITL). Residues 403 to 415 (TLQDHAPWVPYLS) lie on the Extracellular side of the membrane. Residues 416–436 (IVGILAIIASFCSGPGGIPFI) form a helical membrane-spanning segment. The Cytoplasmic portion of the chain corresponds to 437–451 (LTGEFFQQSQRPAAF). A helical transmembrane segment spans residues 452-472 (IIAGTVNWLSNFAVGLLFPFI). The Extracellular portion of the chain corresponds to 473–478 (QKSLDT). A helical transmembrane segment spans residues 479 to 499 (YCFLVFATICITGAIYLYFVL). Over 500–540 (PETKNRTYAEISQAFSKRNKAYPPEEKIDSAVTDGKINGRP) the chain is Cytoplasmic. S515 is modified (phosphoserine). Residues 519–540 (KAYPPEEKIDSAVTDGKINGRP) form a disordered region.

This sequence belongs to the major facilitator superfamily. Sugar transporter (TC 2.A.1.1) family. Glucose transporter subfamily. As to expression, most strongly expressed in basolateral membranes of proximal renal tubular cells, liver and placenta. Also detected in lung, blood leukocytes, heart skeletal muscle and chondrocytes from articular cartilage. Detected in kidney membrane (at protein level). Only detected in the apical membranes of polarized renal tubular cells and placenta. Detected in kidney membrane (at protein level).

The protein resides in the cell membrane. Its subcellular location is the basolateral cell membrane. It localises to the apical cell membrane. The enzyme catalyses urate(out) = urate(in). Its activity is regulated as follows. Extracellular glucose and urate accelerate urate efflux. Intracellular urate, glucose and fructose accelerate urate influx. No effect of extracellular urate, glucose or fructose on urate efflux. Intracellular urate and fructose slightly accelerate urate influx. High-capacity urate transporter, which may play a role in the urate reabsorption by proximal tubules. May have a residual high-affinity, low-capacity glucose and fructose transporter activity. Transports urate at rates 45- to 60-fold faster than glucose. Does not transport galactose. May mediate small uptake of adenine but not of other nucleobases. The protein is Solute carrier family 2, facilitated glucose transporter member 9 of Homo sapiens (Human).